The following is a 232-amino-acid chain: Peroxiredoxin (232 aa).

The region spanning 6-161 (PSIGEKFPEI…ILRLIESLQI (156 aa)) is the Thioredoxin domain. Cys-48 serves as the catalytic Cysteine sulfenic acid (-SOH) intermediate. Arg-124 contributes to the substrate binding site. Cys-203 and Cys-209 are oxidised to a cystine.

Belongs to the peroxiredoxin family. Prx6 subfamily. In terms of assembly, homodecamer. Pentamer of dimers that assemble into a ring structure.

It is found in the cytoplasm. It catalyses the reaction a hydroperoxide + [thioredoxin]-dithiol = an alcohol + [thioredoxin]-disulfide + H2O. Thiol-specific peroxidase that catalyzes the reduction of hydrogen peroxide and organic hydroperoxides to water and alcohols, respectively. Plays a role in cell protection against oxidative stress by detoxifying peroxides. The chain is Peroxiredoxin from Hyperthermus butylicus (strain DSM 5456 / JCM 9403 / PLM1-5).